The following is a 420-amino-acid chain: Gamma-glutamyl phosphate reductase (420 aa).

Belongs to the gamma-glutamyl phosphate reductase family.

It localises to the cytoplasm. The enzyme catalyses L-glutamate 5-semialdehyde + phosphate + NADP(+) = L-glutamyl 5-phosphate + NADPH + H(+). It functions in the pathway amino-acid biosynthesis; L-proline biosynthesis; L-glutamate 5-semialdehyde from L-glutamate: step 2/2. Its function is as follows. Catalyzes the NADPH-dependent reduction of L-glutamate 5-phosphate into L-glutamate 5-semialdehyde and phosphate. The product spontaneously undergoes cyclization to form 1-pyrroline-5-carboxylate. The chain is Gamma-glutamyl phosphate reductase from Streptococcus pneumoniae serotype 19F (strain G54).